The primary structure comprises 322 residues: ATP-dependent 6-phosphofructokinase (322 aa).

Gly-11 is a binding site for ATP. Position 21–25 (21–25 (RAVAR)) interacts with ADP. ATP is bound by residues 72–73 (RY) and 102–105 (GDGS). Asp-103 contributes to the Mg(2+) binding site. A substrate-binding site is contributed by 125 to 127 (TID). Asp-127 serves as the catalytic Proton acceptor. Arg-154 serves as a coordination point for ADP. Substrate is bound by residues Arg-162 and 169 to 171 (MGR). Residues 185–187 (GAD) and 213–215 (KDY) contribute to the ADP site. Substrate contacts are provided by residues Glu-222, Arg-246, and 252 to 255 (HVQR).

This sequence belongs to the phosphofructokinase type A (PFKA) family. ATP-dependent PFK group I subfamily. Prokaryotic clade 'B1' sub-subfamily. In terms of assembly, homotetramer. Mg(2+) is required as a cofactor.

Its subcellular location is the cytoplasm. The enzyme catalyses beta-D-fructose 6-phosphate + ATP = beta-D-fructose 1,6-bisphosphate + ADP + H(+). Its pathway is carbohydrate degradation; glycolysis; D-glyceraldehyde 3-phosphate and glycerone phosphate from D-glucose: step 3/4. Its activity is regulated as follows. Allosterically activated by ADP and other diphosphonucleosides, and allosterically inhibited by phosphoenolpyruvate. In terms of biological role, catalyzes the phosphorylation of D-fructose 6-phosphate to fructose 1,6-bisphosphate by ATP, the first committing step of glycolysis. The polypeptide is ATP-dependent 6-phosphofructokinase (Pediococcus pentosaceus (strain ATCC 25745 / CCUG 21536 / LMG 10740 / 183-1w)).